A 427-amino-acid polypeptide reads, in one-letter code: MGNCVARSGTAVDAGGDGGEDGKRRRRRWKAPREDQLGMVPGRIFSNDGRSRTATVYTQQGRKGINQDAMLVWDGFGGEDDGVLCGVFDGHGPHGHVVARRVRDSLPLRLMSAARDSGADMPAAAWRKAFARAYKAMDKDLRSHPSLDCFCSGSTAVTVLKLGSDLYMANIGDSRAVLGSREATGGGMVAVQLTVDLKPDVPSEAERIKKCRGRVFALQDEPEVPRVWLPFDDAPGLAMARAFGDFCLKDYGVISVPEFFHWSLTEKDQFVILASDGVWDVLSNQEAVDIVSASPSRSKAAKSLVEAATREWKTKYPTSKIDDCAVVCLYLDGKMDHERDSTASLDNISIEEGSVADPNEPQEQEPTLTRNFTVRTVAGSTQEKTLAGVDARIAGVANDQNWSGLDGVTRVNSLVQLPRFSEERAIG.

The segment at 1 to 36 (MGNCVARSGTAVDAGGDGGEDGKRRRRRWKAPREDQ) is disordered. The region spanning 53–331 (TATVYTQQGR…DDCAVVCLYL (279 aa)) is the PPM-type phosphatase domain. Residues Asp89, Gly90, Asp276, and Asp322 each coordinate Mn(2+).

The protein belongs to the PP2C family. The cofactor is Mg(2+). Requires Mn(2+) as cofactor.

The enzyme catalyses O-phospho-L-seryl-[protein] + H2O = L-seryl-[protein] + phosphate. The catalysed reaction is O-phospho-L-threonyl-[protein] + H2O = L-threonyl-[protein] + phosphate. This is Probable protein phosphatase 2C 64 from Oryza sativa subsp. japonica (Rice).